We begin with the raw amino-acid sequence, 87 residues long: Beta-toxin CsE3 (87 aa).

Positions M1 to A19 are cleaved as a signal peptide. Residues K20 to N85 form the LCN-type CS-alpha/beta domain. Intrachain disulfides connect C31/C84, C35/C60, C44/C65, and C48/C67. N85 is subject to Asparagine amide.

It belongs to the long (4 C-C) scorpion toxin superfamily. Sodium channel inhibitor family. Beta subfamily. Expressed by the venom gland.

The protein localises to the secreted. Beta toxins bind voltage-independently at site-4 of sodium channels (Nav) and shift the voltage of activation toward more negative potentials thereby affecting sodium channel activation and promoting spontaneous and repetitive firing. The polypeptide is Beta-toxin CsE3 (Centruroides sculpturatus (Arizona bark scorpion)).